The chain runs to 158 residues: Disease resistance response protein DRRG49-C (158 aa).

Belongs to the BetVI family.

This chain is Disease resistance response protein DRRG49-C, found in Pisum sativum (Garden pea).